The primary structure comprises 365 residues: MNLAAMDPTTYDVQLETKRVKLTQLFADFDTPELETFSSEPAHYRMRAEFRVWHEGEDLYYYMFDKELNSKVRCDQFLPASELINKMMPALVELLKPNTILRHRLFQIDFLSTLSGEILVSLLYHKQLDSEWEQQAKILKQTLSTQFNVNLIGRARKQKIIFDKDFVVESLNVAGKQLQYHQIENSFTQPNGKVSVKMLEWAIDVTKNSTGDLLELYCGNGNFSIALAQNFDRVLATELAKPSVESAQYNIKVNQVENLQIIRMSAEDFTEAMAKKRSFRRLEGIDLDSYNCNTIFVDPPRAGLDADTVKLVQGYERIVYISCNPHTLLDNLAELSKTHKITRFALFDQFPYTDHMESGVFLEKR.

S-adenosyl-L-methionine contacts are provided by Q189, Y217, N222, E238, and D298. C323 serves as the catalytic Nucleophile. E357 functions as the Proton acceptor in the catalytic mechanism.

This sequence belongs to the class I-like SAM-binding methyltransferase superfamily. RNA M5U methyltransferase family. TrmA subfamily.

The catalysed reaction is uridine(54) in tRNA + S-adenosyl-L-methionine = 5-methyluridine(54) in tRNA + S-adenosyl-L-homocysteine + H(+). It carries out the reaction uridine(341) in tmRNA + S-adenosyl-L-methionine = 5-methyluridine(341) in tmRNA + S-adenosyl-L-homocysteine + H(+). Functionally, dual-specificity methyltransferase that catalyzes the formation of 5-methyluridine at position 54 (m5U54) in all tRNAs, and that of position 341 (m5U341) in tmRNA (transfer-mRNA). This is tRNA/tmRNA (uracil-C(5))-methyltransferase from Shewanella halifaxensis (strain HAW-EB4).